A 130-amino-acid chain; its full sequence is Protein ApaG (130 aa).

The ApaG domain maps to 3 to 127; sequence RALTRDIEVT…FSLDSPGLVR (125 aa).

This is Protein ApaG from Sinorhizobium fredii (strain NBRC 101917 / NGR234).